The primary structure comprises 83 residues: U5-theraphotoxin-Hs1a 4 (83 aa).

Positions 1 to 21 are cleaved as a signal peptide; the sequence is MKTSMFLTLTGLVLLFVDCYA. A propeptide spanning residues 22–49 is cleaved from the precursor; sequence SESEEKEFPKELLSSIFAADSDFKVEER. 3 disulfide bridges follow: Cys51/Cys63, Cys56/Cys68, and Cys62/Cys75.

This sequence belongs to the neurotoxin 10 (Hwtx-1) family. 51 (Hntx-8) subfamily. Hntx-8 sub-subfamily. Expressed by the venom gland.

It localises to the secreted. Agglutinates erythrocytes. The sequence is that of U5-theraphotoxin-Hs1a 4 from Cyriopagopus schmidti (Chinese bird spider).